The chain runs to 142 residues: Large ribosomal subunit protein uL13 (142 aa).

Belongs to the universal ribosomal protein uL13 family. Part of the 50S ribosomal subunit.

Functionally, this protein is one of the early assembly proteins of the 50S ribosomal subunit, although it is not seen to bind rRNA by itself. It is important during the early stages of 50S assembly. This is Large ribosomal subunit protein uL13 from Teredinibacter turnerae (strain ATCC 39867 / T7901).